A 185-amino-acid chain; its full sequence is Large ribosomal subunit protein uL5 (185 aa).

This sequence belongs to the universal ribosomal protein uL5 family. In terms of assembly, part of the 50S ribosomal subunit; part of the 5S rRNA/L5/L18/L25 subcomplex. Contacts the 5S rRNA and the P site tRNA. Forms a bridge to the 30S subunit in the 70S ribosome.

Functionally, this is one of the proteins that bind and probably mediate the attachment of the 5S RNA into the large ribosomal subunit, where it forms part of the central protuberance. In the 70S ribosome it contacts protein S13 of the 30S subunit (bridge B1b), connecting the 2 subunits; this bridge is implicated in subunit movement. Contacts the P site tRNA; the 5S rRNA and some of its associated proteins might help stabilize positioning of ribosome-bound tRNAs. In Rhizobium leguminosarum bv. trifolii (strain WSM2304), this protein is Large ribosomal subunit protein uL5.